The sequence spans 291 residues: Methylsterol monooxygenase 1 (291 aa).

The next 2 membrane-spanning stretches (helical) occupy residues L55–L75 and M100–T120. A Fatty acid hydroxylase domain is found at C145 to T274. A Histidine box-1 motif is present at residues H157–H161. Residues H170–H174 carry the Histidine box-2 motif. The chain crosses the membrane as a helical span at residues F199 to F219. The Histidine box-3 motif lies at F249 to M255.

The protein belongs to the sterol desaturase family. Fe cation is required as a cofactor.

The protein resides in the endoplasmic reticulum membrane. The catalysed reaction is 4,4-dimethyl-5alpha-cholest-7-en-3beta-ol + 6 Fe(II)-[cytochrome b5] + 3 O2 + 5 H(+) = 4alpha-carboxy-4beta-methyl-5alpha-cholest-7-ene-3beta-ol + 6 Fe(III)-[cytochrome b5] + 4 H2O. It functions in the pathway steroid biosynthesis; zymosterol biosynthesis; zymosterol from lanosterol: step 3/6. In terms of biological role, catalyzes the first step in the removal of the two C-4 methyl groups of 4,4-dimethylzymosterol. The polypeptide is Methylsterol monooxygenase 1 (msmo1) (Danio rerio (Zebrafish)).